A 627-amino-acid chain; its full sequence is Phosphomethylpyrimidine synthase (627 aa).

Residues 1–24 show a composition bias toward polar residues; it reads MSATQKNNITRLEQLDRQSTQPFP. The disordered stretch occupies residues 1–29; the sequence is MSATQKNNITRLEQLDRQSTQPFPNSRKV. Residues asparagine 231, methionine 260, tyrosine 289, histidine 325, 345–347, 386–389, and glutamate 425 each bind substrate; these read SRG and DGLR. Histidine 429 serves as a coordination point for Zn(2+). Tyrosine 452 serves as a coordination point for substrate. Histidine 493 lines the Zn(2+) pocket. Positions 573, 576, and 581 each coordinate [4Fe-4S] cluster.

It belongs to the ThiC family. As to quaternary structure, homodimer. [4Fe-4S] cluster serves as cofactor.

The enzyme catalyses 5-amino-1-(5-phospho-beta-D-ribosyl)imidazole + S-adenosyl-L-methionine = 4-amino-2-methyl-5-(phosphooxymethyl)pyrimidine + CO + 5'-deoxyadenosine + formate + L-methionine + 3 H(+). It functions in the pathway cofactor biosynthesis; thiamine diphosphate biosynthesis. Its function is as follows. Catalyzes the synthesis of the hydroxymethylpyrimidine phosphate (HMP-P) moiety of thiamine from aminoimidazole ribotide (AIR) in a radical S-adenosyl-L-methionine (SAM)-dependent reaction. The protein is Phosphomethylpyrimidine synthase of Pseudomonas aeruginosa (strain LESB58).